Reading from the N-terminus, the 509-residue chain is Transmembrane protein 102 (509 aa).

Residues 1-312 are Extracellular-facing; that stretch reads MASTVWGGAP…VLLATPEPPR (312 aa). The segment at 167–236 is disordered; sequence PPVPEESDMT…NPETPEPLET (70 aa). Residues 174–204 show a composition bias toward basic and acidic residues; the sequence is DMTHQTHSKESPTDRENSVDPSHDYVPEPEP. Residues 207–224 show a composition bias toward low complexity; that stretch reads SLQKSSSDLSESQSSYKD. Residues 313–329 traverse the membrane as a helical segment; it reads HLLLFDLIPVVTVTGWP. Residues 330–509 lie on the Cytoplasmic side of the membrane; that stretch reads DTARSHSWAG…GLAGVGGGTH (180 aa).

In terms of assembly, interacts with CSF2RB; this interaction occurs preferentially in the absence of CSF2.

The protein resides in the cell membrane. Functionally, selectively involved in CSF2 deprivation-induced apoptosis via a mitochondria-dependent pathway. This Mus musculus (Mouse) protein is Transmembrane protein 102 (Tmem102).